A 105-amino-acid chain; its full sequence is Nitrogen fixation nifHD region glnB-like protein 1 (105 aa).

Belongs to the P(II) protein family.

Its function is as follows. Could be involved in the regulation of nitrogen fixation. The chain is Nitrogen fixation nifHD region glnB-like protein 1 (glnBI) from Methanococcus maripaludis (Methanococcus deltae).